The following is a 62-amino-acid chain: Large ribosomal subunit protein bL28 (62 aa).

Belongs to the bacterial ribosomal protein bL28 family.

The chain is Large ribosomal subunit protein bL28 from Acidothermus cellulolyticus (strain ATCC 43068 / DSM 8971 / 11B).